Reading from the N-terminus, the 95-residue chain is Beta-alanine degradation protein BauB (95 aa).

Residues 23–90 enclose the Cupin type-2 domain; the sequence is WRFAPGAETG…NASAHEVVFV (68 aa).

Its function is as follows. Involved in the degradation of beta-alanine. The protein is Beta-alanine degradation protein BauB (bauB) of Pseudomonas aeruginosa (strain ATCC 15692 / DSM 22644 / CIP 104116 / JCM 14847 / LMG 12228 / 1C / PRS 101 / PAO1).